Consider the following 643-residue polypeptide: Clathrin interactor 1 (643 aa).

One can recognise an ENTH domain in the interval 16–149 (NVVMNYSEIE…QDDDRLREER (134 aa)). Arginine 29 is an a 1,2-diacyl-sn-glycero-3-phospho-(1D-myo-inositol-4,5-bisphosphate) binding site. Positions 52–54 (FMY) are interaction with VTI1B. Arginine 67 contributes to the a 1,2-diacyl-sn-glycero-3-phospho-(1D-myo-inositol-4,5-bisphosphate) binding site. 2 interaction with VTI1B regions span residues 94–96 (SER) and 142–153 (DDRLREERKKAK). Phosphoserine is present on residues serine 163, serine 166, serine 173, serine 205, serine 210, serine 227, serine 245, and serine 299. The interval 219-331 (FRRKDREDSP…SSGDLVDLFD (113 aa)) is disordered. Over residues 222 to 239 (KDREDSPERCSDSDEEKK) the composition is skewed to basic and acidic residues. Over residues 300 to 310 (PDQNASTHTPQ) the composition is skewed to polar residues. Threonine 308 carries the phosphothreonine modification. The span at 311–323 (SSLKTSVPSSKSS) shows a compositional bias: low complexity. Serine 312 and serine 642 each carry phosphoserine.

It belongs to the epsin family. As to quaternary structure, binds clathrin heavy chain and AP-2. Interacts with VTI1B. Interacts with GGA2 (via GAE domain). Interacts with AP1G1 (via GAE domain). Interacts with AP1G2 (via GAE domain).

It is found in the cytoplasm. The protein localises to the perinuclear region. Its subcellular location is the membrane. The protein resides in the cytoplasmic vesicle. It localises to the clathrin-coated vesicle. In terms of biological role, binds to membranes enriched in phosphatidylinositol 4,5-bisphosphate (PtdIns(4,5)P2). May have a role in transport via clathrin-coated vesicles from the trans-Golgi network to endosomes. Stimulates clathrin assembly. The chain is Clathrin interactor 1 (CLINT1) from Bos taurus (Bovine).